The chain runs to 366 residues: Zinc transporter ZIP13 (366 aa).

At 1-5 (MTKQK) the chain is on the lumenal side. A helical transmembrane segment spans residues 6 to 26 (LLLNGTFSLILIVACEAQQLP). Topologically, residues 27–57 (RSHAASSSGPLCEKEAESWGNLLSSERLDAW) are cytoplasmic. Residues 58-78 (ICSLIGSFMVGLSGIFPLLVI) form a helical membrane-spanning segment. Over 79–97 (PFETGAALRSEAGSRRLKQ) the chain is Lumenal. A helical membrane pass occupies residues 98–118 (LLSFAIGGLLGNVFLHLLPEA). Residues 119-137 (WAYTCSAAAGEGQSFQQQK) are Cytoplasmic-facing. The chain crosses the membrane as a helical span at residues 138-158 (LLGLWVIIGFLTFLALEKIFL). The Lumenal portion of the chain corresponds to 159–225 (EKEEEECPGV…NRIKISGYLN (67 aa)). Residues 183–205 (SGYPPSKVAGKSQRAEKNSTQCN) are disordered. The helical transmembrane segment at 226 to 246 (LLANTIDNFTHGLAVAASFLV) threads the bilayer. Residues 247–282 (SRKVGFLTTMAILLHEIPHEVGDFAILLRAGFDRWS) are Cytoplasmic-facing. The XEXPHE-motif signature appears at 261-266 (HEIPHE). The helical transmembrane segment at 283-303 (AAKMQLSTALGGIVGACFAIC) threads the bilayer. Residues 304 to 313 (AQSPKGAGET) lie on the Lumenal side of the membrane. Residues 314–334 (VAWILPFTSGGFLYIALVNVV) form a helical membrane-spanning segment. The Cytoplasmic portion of the chain corresponds to 335 to 343 (PDLLEEKNP). The helical transmembrane segment at 344-364 (WNSLQQILLLCTGITVMVLLA) threads the bilayer. The Lumenal segment spans residues 365-366 (HN).

The protein belongs to the ZIP transporter (TC 2.A.5) family. In terms of assembly, homodimer.

The protein localises to the golgi apparatus membrane. Its subcellular location is the cytoplasmic vesicle membrane. It localises to the endoplasmic reticulum membrane. The catalysed reaction is Zn(2+)(in) = Zn(2+)(out). Its function is as follows. Functions as a zinc transporter transporting Zn(2+) from the Golgi apparatus to the cytosol and thus influences the zinc level at least in areas of the cytosol. This is Zinc transporter ZIP13 from Gallus gallus (Chicken).